The primary structure comprises 315 residues: Ribosomal protein L11 methyltransferase (315 aa).

Positions 164, 185, 207, and 249 each coordinate S-adenosyl-L-methionine.

This sequence belongs to the methyltransferase superfamily. PrmA family.

The protein resides in the cytoplasm. The catalysed reaction is L-lysyl-[protein] + 3 S-adenosyl-L-methionine = N(6),N(6),N(6)-trimethyl-L-lysyl-[protein] + 3 S-adenosyl-L-homocysteine + 3 H(+). Functionally, methylates ribosomal protein L11. The protein is Ribosomal protein L11 methyltransferase of Lactobacillus gasseri (strain ATCC 33323 / DSM 20243 / BCRC 14619 / CIP 102991 / JCM 1131 / KCTC 3163 / NCIMB 11718 / NCTC 13722 / AM63).